The chain runs to 254 residues: UPF0328 protein ECU01_0070/ECU01_1540/ECU02_1570/ECU04_0080/ECU08_2100 (254 aa).

It belongs to the UPF0328 family.

The sequence is that of UPF0328 protein ECU01_0070/ECU01_1540/ECU02_1570/ECU04_0080/ECU08_2100 from Encephalitozoon cuniculi (strain GB-M1) (Microsporidian parasite).